The primary structure comprises 453 residues: DDB1- and CUL4-associated factor 12 (453 aa).

Residues M1–A12 show a composition bias toward basic residues. The tract at residues M1–H34 is disordered. The tract at residues M1–R38 is required for nuclear location and interaction with MOV10. S15 bears the Phosphoserine mark. WD repeat units follow at residues E81–I122, T123–P175, V176–D242, I243–S286, K287–V331, and K332–D366.

Belongs to the WD repeat DCAF12 family. In terms of assembly, component of the DCX(DCAF12) E3 ubiquitin ligase complex, at least composed of CUL4 (CUL4A or CUL4B), DDB1, DCAF12 and RBX1. As to expression, highly expressed in lung cancer tissues and some cancer cell lines. Restricted expression in normal testis.

It is found in the cytoplasm. It localises to the cytoskeleton. The protein localises to the microtubule organizing center. Its subcellular location is the centrosome. The protein resides in the nucleus. It functions in the pathway protein modification; protein ubiquitination. Functionally, substrate-recognition component of a DCX (DDB1-CUL4-X-box) E3 ubiquitin-protein ligase complex of the DesCEND (destruction via C-end degrons) pathway, which recognizes a C-degron located at the extreme C terminus of target proteins, leading to their ubiquitination and degradation. The C-degron recognized by the DesCEND pathway is usually a motif of less than ten residues and can be present in full-length proteins, truncated proteins or proteolytically cleaved forms. The DCX(DCAF12) complex specifically recognizes proteins with a diglutamate (Glu-Glu) at the C-terminus, such as MAGEA3, MAGEA6 and CCT5, leading to their ubiquitination and degradation. Ubiquitination of MAGEA3, MAGEA6 by DCX(DCAF12) complex is required for starvation-induced autophagy. Also directly recognizes the C-terminal glutamate-leucine (Glu-Leu) degron as an alternative degron in proteins such as MOV10, leading to their ubiquitination and degradation. Controls the protein level of MOV10 during spermatogenesis and in T cells, especially after their activation. The polypeptide is DDB1- and CUL4-associated factor 12 (Homo sapiens (Human)).